The following is a 622-amino-acid chain: Palmitoyltransferase ZDHHC13 (622 aa).

M1 carries the post-translational modification N-acetylmethionine. At 1–291 (MEGPGLGSQC…RLWRWLQKCE (291 aa)) the chain is on the cytoplasmic side. ANK repeat units lie at residues 43–78 (PLIE…VRQP), 81–110 (ENVS…VVDQ), 115–144 (LNST…DPTL), 148–177 (EGFS…SVNM), 181–211 (NGQT…SLNV), 216–245 (HQNT…SLDI), and 249–277 (KGET…KMRA). The helical transmembrane segment at 292-312 (LFLLLMLSVITMWAIGYILDF) threads the bilayer. Topologically, residues 313-320 (NSDSWLLK) are lumenal. A helical transmembrane segment spans residues 321–341 (GCLLVTLFFLTSLFPRFLVGY). Residues 342 to 347 (KNLVYL) are Cytoplasmic-facing. Residues 348–368 (PTAFLLSSVFWIFMTWFILFF) form a helical membrane-spanning segment. The Lumenal segment spans residues 369 to 370 (PD). A helical membrane pass occupies residues 371 to 391 (LAGAPFYFSFIFSIVAFLYFF). The Cytoplasmic portion of the chain corresponds to 392-470 (YKTWATDPGF…RCIGFGNHHY (79 aa)). The region spanning 426 to 476 (TFCTSCLIRKPLRSLHCHVCNCCVARYDQHCLWTGRCIGFGNHHYYIFFLF) is the DHHC domain. The S-palmitoyl cysteine intermediate role is filled by C456. The chain crosses the membrane as a helical span at residues 471–491 (YIFFLFFLSMVCGWIIYGSFI). The Lumenal segment spans residues 492–518 (YLSSHCATTFKEDGLWTYLNQIVACSP). The chain crosses the membrane as a helical span at residues 519 to 539 (WVLYILMLATFHFSWSTFLLL). Residues 540 to 622 (NQLFQIAFLG…PAREKVLRSV (83 aa)) lie on the Cytoplasmic side of the membrane.

Belongs to the DHHC palmitoyltransferase family. AKR/ZDHHC17 subfamily. As to quaternary structure, interacts (via ANK repeats) with CLIP3. Interacts (via ANK repeats) with DNAJC5 (via C-terminus). Interacts (via ANK repeats) with HTT. Interacts (via ANK repeats) with MAP6. Interacts (via ANK repeats) with SNAP23. Interacts (via ANK repeats) with SNAP25. May interact (via ANK repeats) with SPRED2.

Its subcellular location is the golgi apparatus membrane. The protein resides in the cytoplasmic vesicle membrane. It catalyses the reaction L-cysteinyl-[protein] + hexadecanoyl-CoA = S-hexadecanoyl-L-cysteinyl-[protein] + CoA. Functionally, palmitoyltransferase that could catalyze the addition of palmitate onto various protein substrates. Palmitoyltransferase for HTT and GAD2. May play a role in Mg(2+) transport. The polypeptide is Palmitoyltransferase ZDHHC13 (Homo sapiens (Human)).